The primary structure comprises 342 residues: Glucan endo-1,3-beta-glucosidase (342 aa).

The N-terminal stretch at 1-26 (MLASSPMLLFLLSLLMAYNFDTTAGQ) is a signal peptide. E119 acts as the Proton donor in catalysis. Residue E261 is the Nucleophile of the active site.

It belongs to the glycosyl hydrolase 17 family. The N-terminus is blocked.

The protein localises to the vacuole. The catalysed reaction is Hydrolysis of (1-&gt;3)-beta-D-glucosidic linkages in (1-&gt;3)-beta-D-glucans.. Its function is as follows. Is thought to be an important plant defense-related product against fungal pathogens. Accumulation of the glucanase can be detected as early as 4 hours after inoculation. The chain is Glucan endo-1,3-beta-glucosidase (BGL) from Brassica campestris (Field mustard).